The following is a 61-amino-acid chain: Small ribosomal subunit protein uS14 (61 aa).

Residues Cys24, Cys27, Cys40, and Cys43 each coordinate Zn(2+).

This sequence belongs to the universal ribosomal protein uS14 family. Zinc-binding uS14 subfamily. As to quaternary structure, part of the 30S ribosomal subunit. Contacts proteins S3 and S10. Zn(2+) is required as a cofactor.

Functionally, binds 16S rRNA, required for the assembly of 30S particles and may also be responsible for determining the conformation of the 16S rRNA at the A site. In Geotalea uraniireducens (strain Rf4) (Geobacter uraniireducens), this protein is Small ribosomal subunit protein uS14.